A 319-amino-acid polypeptide reads, in one-letter code: Ribonucleoside-diphosphate reductase small chain (319 aa).

Residues aspartate 70, glutamate 101, and histidine 104 each coordinate Fe cation. Tyrosine 108 is a catalytic residue. Fe cation contacts are provided by glutamate 163, glutamate 197, and histidine 200. The tract at residues 313-319 is interaction with R1; sequence FSLDVDF.

The protein belongs to the ribonucleoside diphosphate reductase small chain family. Interacts with RNR1/OPG080 subunit. Can interact with host RNR1 supunit. Requires Fe cation as cofactor.

It catalyses the reaction a 2'-deoxyribonucleoside 5'-diphosphate + [thioredoxin]-disulfide + H2O = a ribonucleoside 5'-diphosphate + [thioredoxin]-dithiol. In terms of biological role, ribonucleoside-diphosphate reductase holoenzyme provides the precursors necessary for viral DNA synthesis. Allows virus growth in non-dividing cells. Catalyzes the biosynthesis of deoxyribonucleotides from the corresponding ribonucleotides. The sequence is that of Ribonucleoside-diphosphate reductase small chain (OPG048) from Bos taurus (Bovine).